A 700-amino-acid chain; its full sequence is Chondroitinase-AC (700 aa).

Residues 1-22 form the signal peptide; the sequence is MKKLFVTCIVFFSILSPALLIA. Catalysis depends on residues histidine 225, tyrosine 234, and arginine 288. O-linked (Man...) serine glycosylation occurs at serine 328. 4 residues coordinate Ca(2+): glutamate 405, aspartate 407, aspartate 416, and tyrosine 417. O-linked (Man...) serine glycosylation occurs at serine 455.

It belongs to the polysaccharide lyase 8 family. Monomer. Ca(2+) is required as a cofactor.

The catalysed reaction is Eliminative degradation of polysaccharides containing 1,4-beta-D-hexosaminyl and 1,3-beta-D-glucuronosyl linkages to disaccharides containing 4-deoxy-beta-D-gluc-4-enuronosyl groups.. The protein is Chondroitinase-AC (cslA) of Pedobacter heparinus (strain ATCC 13125 / DSM 2366 / CIP 104194 / JCM 7457 / NBRC 12017 / NCIMB 9290 / NRRL B-14731 / HIM 762-3).